Consider the following 231-residue polypeptide: 7-cyano-7-deazaguanine synthase (231 aa).

Residue 8–18 (FSGGQDSTTCL) coordinates ATP. 4 residues coordinate Zn(2+): C188, C197, C200, and C203.

The protein belongs to the QueC family. Requires Zn(2+) as cofactor.

It catalyses the reaction 7-carboxy-7-deazaguanine + NH4(+) + ATP = 7-cyano-7-deazaguanine + ADP + phosphate + H2O + H(+). It functions in the pathway purine metabolism; 7-cyano-7-deazaguanine biosynthesis. Its function is as follows. Catalyzes the ATP-dependent conversion of 7-carboxy-7-deazaguanine (CDG) to 7-cyano-7-deazaguanine (preQ(0)). The polypeptide is 7-cyano-7-deazaguanine synthase (Salmonella paratyphi B (strain ATCC BAA-1250 / SPB7)).